We begin with the raw amino-acid sequence, 105 residues long: Large ribosomal subunit protein bL21 (105 aa).

This sequence belongs to the bacterial ribosomal protein bL21 family. Part of the 50S ribosomal subunit. Contacts protein L20.

This protein binds to 23S rRNA in the presence of protein L20. This is Large ribosomal subunit protein bL21 from Rickettsia peacockii (strain Rustic).